We begin with the raw amino-acid sequence, 182 residues long: Ribosome maturation factor RimM (182 aa).

The 78-residue stretch at 99–176 (DDEYYHADLI…ELPAEIEGDT (78 aa)) folds into the PRC barrel domain.

It belongs to the RimM family. As to quaternary structure, binds ribosomal protein uS19.

Its subcellular location is the cytoplasm. An accessory protein needed during the final step in the assembly of 30S ribosomal subunit, possibly for assembly of the head region. Essential for efficient processing of 16S rRNA. May be needed both before and after RbfA during the maturation of 16S rRNA. It has affinity for free ribosomal 30S subunits but not for 70S ribosomes. The chain is Ribosome maturation factor RimM from Rhodopseudomonas palustris (strain HaA2).